We begin with the raw amino-acid sequence, 667 residues long: MKQRSLFSVLCFFFISFGVASVSAQTCTTDKGTFRPNGTYDVNRRLILSSLPSNVTDQDGLYYNGSIGQQPNRVYAIGMCIPGSTSEDCSDCIKKESEFFLKNCPNQTEAYSWPGEPTLCYVRYSNTSFSGSADLNPRNWLTNTGDLDSNLTEFTKIWEGLMGRMISAASTAKSTPSSSDNHYSADSAVLTPLLNIYALMQCTPDLSSGDCENCLRQSAIDYQSCCSQKRGGVVMRPSCFLRWDLYTYSNAFDNLTVASPPPEPPVTVPQPAGDQDNPTNNDSKGISAGVVVAITVPTVIAILILLVLGFVLFRRRKSYQRTKTESESDISTTDSLVYDFKTIEAATNKFSTSNKLGEGGFGAVYKGKLSNGTDVAVKRLSKKSGQGTREFRNEAVLVTKLQHRNLVRLLGFCLEREEQILIYEFVHNKSLDYFLFDPEKQSQLDWTRRYKIIGGIARGILYLHQDSRLKIIHRDLKASNILLDADMNPKIADFGLATIFGVEQTQGNTNRIAGTYAYMSPEYAMHGQYSMKSDIYSFGVLVLEIISGKKNSGVYQMDETSTAGNLVTYASRLWRNKSPLELVDPTFGRNYQSNEVTRCIHIALLCVQENPEDRPMLSTIILMLTSNTITLPVPRLPGFFPRSRQLKLVSEGSESDQYTSKSSSFSS.

The signal sequence occupies residues 1–24 (MKQRSLFSVLCFFFISFGVASVSA). Gnk2-homologous domains are found at residues 25–129 (QTCT…NTSF) and 135–248 (LNPR…LYTY). The Extracellular portion of the chain corresponds to 25 to 292 (QTCTTDKGTF…SKGISAGVVV (268 aa)). Asparagine 37, asparagine 54, asparagine 64, asparagine 106, asparagine 126, asparagine 150, and asparagine 254 each carry an N-linked (GlcNAc...) asparagine glycan. Residues 259 to 268 (SPPPEPPVTV) are compositionally biased toward pro residues. A disordered region spans residues 259-282 (SPPPEPPVTVPQPAGDQDNPTNND). Asparagine 281 carries N-linked (GlcNAc...) asparagine glycosylation. The chain crosses the membrane as a helical span at residues 293–313 (AITVPTVIAILILLVLGFVLF). Residues 314–667 (RRRKSYQRTK…YTSKSSSFSS (354 aa)) are Cytoplasmic-facing. The region spanning 350-629 (FSTSNKLGEG…IILMLTSNTI (280 aa)) is the Protein kinase domain. Residues 356-364 (LGEGGFGAV) and lysine 378 contribute to the ATP site. Residue tyrosine 423 is modified to Phosphotyrosine. The Proton acceptor role is filled by aspartate 475. Serine 479 carries the post-translational modification Phosphoserine. At threonine 515 the chain carries Phosphothreonine. Tyrosine 523 carries the phosphotyrosine modification.

The protein belongs to the protein kinase superfamily. Ser/Thr protein kinase family. CRK subfamily. Detected in root, stem, leaf and flower.

The protein localises to the membrane. It carries out the reaction L-seryl-[protein] + ATP = O-phospho-L-seryl-[protein] + ADP + H(+). It catalyses the reaction L-threonyl-[protein] + ATP = O-phospho-L-threonyl-[protein] + ADP + H(+). The chain is Cysteine-rich receptor-like protein kinase 11 (CRK11) from Arabidopsis thaliana (Mouse-ear cress).